The chain runs to 315 residues: MTIDSGFNHITVLLDEAVEALALRADGCYLDGTFGRGGHSRLILSKLGPQGRLLGFDKDPQAIATGQALAAEDGRFVIVQRSFAELGAEVAARGLHGKVSGVLLDLGVSSPQLDDPERGFSFLNDGPLDMRMNPDQGISAAEFIATAPVEEIARVFKEYGEERFAGRMARAVVERREKQPFTRTADLAEVLKVANPAWEKGKNPATRAFQGLRIHVNNELGDLEAGLEAALDALEVGGRLAVISFHSLEDRIVKLFMRKLVKGEADNLPRNLPVQHKVFEPKIKLIGKAQFASEAELKANPRSRSAVMRVAEKLR.

S-adenosyl-L-methionine contacts are provided by residues 37 to 39 (GGH), Asp-57, Phe-83, Asp-105, and Gln-112.

This sequence belongs to the methyltransferase superfamily. RsmH family.

The protein resides in the cytoplasm. It catalyses the reaction cytidine(1402) in 16S rRNA + S-adenosyl-L-methionine = N(4)-methylcytidine(1402) in 16S rRNA + S-adenosyl-L-homocysteine + H(+). In terms of biological role, specifically methylates the N4 position of cytidine in position 1402 (C1402) of 16S rRNA. In Pseudomonas putida (strain ATCC 700007 / DSM 6899 / JCM 31910 / BCRC 17059 / LMG 24140 / F1), this protein is Ribosomal RNA small subunit methyltransferase H.